A 28-amino-acid chain; its full sequence is Gastrin-releasing peptide (28 aa).

Methionine amide is present on Met28.

This sequence belongs to the bombesin/neuromedin-B/ranatensin family.

It localises to the secreted. Its subcellular location is the cytoplasmic vesicle. The protein resides in the secretory vesicle lumen. Functionally, stimulates the release of gastrin and other gastrointestinal hormones. This is Gastrin-releasing peptide (GRP) from Alligator mississippiensis (American alligator).